Reading from the N-terminus, the 324-residue chain is Fibronectin type III domain-containing protein 8 (324 aa).

A Fibronectin type-III domain is found at 179–280; it reads PDTPFIFEHT…KPYKFATLAT (102 aa).

In Macaca fascicularis (Crab-eating macaque), this protein is Fibronectin type III domain-containing protein 8 (FNDC8).